The following is a 247-amino-acid chain: E3 SUMO-protein ligase NSE2 (247 aa).

N-acetylmethionine is present on Met-1. Residues Lys-90 and Lys-107 each participate in a glycyl lysine isopeptide (Lys-Gly) (interchain with G-Cter in SUMO2) cross-link. Ser-116 bears the Phosphoserine mark. Glycyl lysine isopeptide (Lys-Gly) (interchain with G-Cter in SUMO2) cross-links involve residues Lys-125 and Lys-130. An SP-RING-type zinc finger spans residues 154-240 (VDEDIIVTQS…LRRAIENHNK (87 aa)). Zn(2+)-binding residues include Cys-185, His-187, Cys-210, and Cys-215.

Belongs to the NSE2 family. Component of the SMC5-SMC6 complex which consists at least of SMC5, SMC6, NSMCE2, NSMCE1, NSMCE4A or EID3 and NSMCE3. Post-translationally, sumoylated, possibly via autosumoylation.

It is found in the nucleus. It localises to the chromosome. The protein resides in the telomere. The protein localises to the PML body. Its pathway is protein modification; protein sumoylation. Functionally, E3 SUMO-protein ligase component of the SMC5-SMC6 complex, a complex involved in DNA double-strand break repair by homologous recombination. Is not be required for the stability of the complex. The complex may promote sister chromatid homologous recombination by recruiting the SMC1-SMC3 cohesin complex to double-strand breaks. The complex is required for telomere maintenance via recombination in ALT (alternative lengthening of telomeres) cell lines and mediates sumoylation of shelterin complex (telosome) components which is proposed to lead to shelterin complex disassembly in ALT-associated PML bodies (APBs). Acts as an E3 ligase mediating SUMO attachment to various proteins such as SMC6L1 and TSNAX, the shelterin complex subunits TERF1, TERF2, TINF2 and TERF2IP, RAD51AP1, and maybe the cohesin components RAD21 and STAG2. Required for recruitment of telomeres to PML nuclear bodies. SUMO protein-ligase activity is required for the prevention of DNA damage-induced apoptosis by facilitating DNA repair, and for formation of APBs in ALT cell lines. Required for sister chromatid cohesion during prometaphase and mitotic progression. The chain is E3 SUMO-protein ligase NSE2 (NSMCE2) from Homo sapiens (Human).